Reading from the N-terminus, the 344-residue chain is Arginine N-succinyltransferase (344 aa).

Leu-125 provides a ligand contact to succinyl-CoA. Catalysis depends on His-229, which acts as the Proton donor.

Belongs to the arginine N-succinyltransferase family.

The catalysed reaction is succinyl-CoA + L-arginine = N(2)-succinyl-L-arginine + CoA + H(+). The protein operates within amino-acid degradation; L-arginine degradation via AST pathway; L-glutamate and succinate from L-arginine: step 1/5. Functionally, catalyzes the transfer of succinyl-CoA to arginine to produce N(2)-succinylarginine. This chain is Arginine N-succinyltransferase, found in Escherichia fergusonii (strain ATCC 35469 / DSM 13698 / CCUG 18766 / IAM 14443 / JCM 21226 / LMG 7866 / NBRC 102419 / NCTC 12128 / CDC 0568-73).